We begin with the raw amino-acid sequence, 1012 residues long: Vacuolar membrane protease (1012 aa).

Over Met-1 to Thr-60 the chain is Cytoplasmic. A helical membrane pass occupies residues Val-61–Val-81. The Vacuolar portion of the chain corresponds to Pro-82 to Leu-432. A glycan (N-linked (GlcNAc...) asparagine) is linked at Asn-159. 2 residues coordinate Zn(2+): His-215 and Asp-227. Glu-261 serves as the catalytic Proton acceptor. Residues Glu-262, Glu-287, and His-360 each coordinate Zn(2+). Residues Phe-433 to Ile-453 form a helical membrane-spanning segment. Over Leu-454–Tyr-487 the chain is Cytoplasmic. The chain crosses the membrane as a helical span at residues Pro-488–Val-508. The Vacuolar portion of the chain corresponds to Asn-509–Tyr-518. A helical transmembrane segment spans residues Ala-519 to Ala-539. Over Asp-540–Ala-550 the chain is Cytoplasmic. The chain crosses the membrane as a helical span at residues Tyr-551–Val-571. The Vacuolar segment spans residues Asn-572 to Asp-575. The helical transmembrane segment at Ile-576–Ser-596 threads the bilayer. The Cytoplasmic segment spans residues Tyr-597–Trp-710. The span at Ser-614–Leu-629 shows a compositional bias: polar residues. The tract at residues Ser-614–Leu-660 is disordered. The helical transmembrane segment at Val-711–Phe-731 threads the bilayer. Residues Leu-732–Gly-743 are Vacuolar-facing. A helical membrane pass occupies residues Val-744–Leu-764. Residues Ser-765–Thr-777 lie on the Cytoplasmic side of the membrane. The helical transmembrane segment at Phe-778–Ala-798 threads the bilayer. Over Glu-799 to Phe-1012 the chain is Vacuolar. 2 N-linked (GlcNAc...) asparagine glycosylation sites follow: Asn-842 and Asn-878.

Belongs to the peptidase M28 family. Zn(2+) is required as a cofactor.

The protein localises to the vacuole membrane. Its function is as follows. May be involved in vacuolar sorting and osmoregulation. The protein is Vacuolar membrane protease of Coccidioides posadasii (strain RMSCC 757 / Silveira) (Valley fever fungus).